A 98-amino-acid polypeptide reads, in one-letter code: Tan_12Cys (98 aa).

A signal peptide spans 1-21; the sequence is MNLKVLFLLAMVLVTLCLGED. A propeptide spanning residues 22–28 is cleaved from the precursor; it reads RVTDRRK.

The protein belongs to the teretoxin C (TC) superfamily. Post-translationally, contains 6 disulfide bonds. As to expression, expressed by the venom duct.

It localises to the secreted. In Terebra anilis (Auger snail), this protein is Tan_12Cys.